The chain runs to 152 residues: MAIWVDADACPNVIKEILFRAAERTQTPLTLVANQPLRVPPSRFIRTLRVEQGFDVADNEIVRQCAAGDLVITADIPLAAEVLAKGGAALNPRGERYSEASIRERLTMRDFMETLRASGVQTGGPDSLSQRDRQQFAAELEKWLLAVKRRQG.

It belongs to the UPF0178 family.

The protein is UPF0178 protein KPN78578_03210 of Klebsiella pneumoniae subsp. pneumoniae (strain ATCC 700721 / MGH 78578).